Reading from the N-terminus, the 246-residue chain is Complement C1q tumor necrosis factor-related protein 3 (246 aa).

The signal sequence occupies residues 1-22; that stretch reads MLGRQRIWWHLLPLLFLPFCLC. One can recognise a Collagen-like domain in the interval 51–113; that stretch reads GYQGPPGPPG…KGEKGYPGVP (63 aa). A disordered region spans residues 53 to 112; that stretch reads QGPPGPPGPPGIPGNHGNNGNNGATGHEGAKGEKGDKGDLGPRGERGQHGPKGEKGYPGV. Residues 55–64 are compositionally biased toward pro residues; the sequence is PPGPPGPPGI. Over residues 65–74 the composition is skewed to low complexity; it reads PGNHGNNGNN. A compositionally biased stretch (basic and acidic residues) spans 80 to 107; that stretch reads EGAKGEKGDKGDLGPRGERGQHGPKGEK. A C1q domain is found at 113 to 246; sequence PPELQIAFMA…FAGFLLFETK (134 aa).

Its subcellular location is the secreted. This Mus musculus (Mouse) protein is Complement C1q tumor necrosis factor-related protein 3 (C1qtnf3).